A 313-amino-acid chain; its full sequence is Sororin-like protein 1 (313 aa).

The FGF motif signature appears at 44-46 (FGF). Residues 105–287 (ADENQQSVPT…NDNLKELTPG (183 aa)) form a disordered region. A compositionally biased stretch (polar residues) spans 107–118 (ENQQSVPTVSIA). Pro residues predominate over residues 123–134 (PELPPSSSPLLP). Residues 135–154 (PNGSESSSPIPLSLLSTSSL) are compositionally biased toward low complexity. Positions 155–170 (QQRKITPSNLSNTSKP) are enriched in polar residues. The span at 184–196 (HGHHLTRLRKKRR) shows a compositional bias: basic residues. The span at 249 to 264 (EKKILKTYHSQDKDTA) shows a compositional bias: basic and acidic residues. Positions 288-310 (KKEYLKSIKKYFQDVDDYQLHVV) are C-terminal Sororin domain.

The protein belongs to the sororin family. As to quaternary structure, interacts with Pds5 and Psm3.

Its subcellular location is the nucleus. Regulator of sister chromatid cohesion in mitosis stabilizing cohesin complex association with chromatin. Antagonizes the action of wpl1 which stimulates cohesin dissociation from chromatin. Cohesion ensures that chromosome partitioning is accurate in dividing cells and may play an important role in DNA repair. The sequence is that of Sororin-like protein 1 from Schizosaccharomyces pombe (strain 972 / ATCC 24843) (Fission yeast).